A 285-amino-acid polypeptide reads, in one-letter code: Mitochondrial substrate carrier family protein S (285 aa).

The Mitochondrial intermembrane portion of the chain corresponds to 1-9; the sequence is MSTERGLKD. 3 Solcar repeats span residues 4 to 87, 96 to 183, and 197 to 283; these read ERGL…MKVL, LTVG…CKRY, and LNLP…VIKL. The chain crosses the membrane as a helical span at residues 10 to 30; sequence SIAGTVAGAACLFTGHPFDTI. Residues 31–61 lie on the Mitochondrial matrix side of the membrane; the sequence is RVRLQTSNTPIGIMECFRNTIKYEGFSGLYK. The chain crosses the membrane as a helical span at residues 62–82; the sequence is GVTSPLFGMMFETAVLFAGYG. Residues 83-101 lie on the Mitochondrial intermembrane side of the membrane; it reads QMKVLLQKDENTPLTVGQC. Residues 102-122 traverse the membrane as a helical segment; sequence AIAGGFAGVGASVVLTPVELV. Topologically, residues 123 to 150 are mitochondrial matrix; that stretch reads KCRLQVQTTGPQKYKGSLDCLVQILKEG. The chain crosses the membrane as a helical span at residues 151-172; that stretch reads GIRGAYRGFTPTIAREFVGNMA. Topologically, residues 173 to 199 are mitochondrial intermembrane; that stretch reads FFSTYETCKRYFKNKENKPNDDDELNL. The chain crosses the membrane as a helical span at residues 200 to 220; it reads PALIISGGLGGMAYWTVLYPV. Topologically, residues 221–258 are mitochondrial matrix; it reads DVAKSKIQISEGAGPSPSIVKVLKEIYSKEGVKGLFRG. Residues 259-277 traverse the membrane as a helical segment; sequence YTPTIIRSFPANAAMFSVY. Over 278–285 the chain is Mitochondrial intermembrane; it reads ELVIKLLG.

It belongs to the mitochondrial carrier (TC 2.A.29) family.

It is found in the mitochondrion inner membrane. Mitochondrial solute carriers shuttle metabolites, nucleotides, and cofactors through the mitochondrial inner membrane. Mediates the transport of acylcarnitines of different length across the mitochondrial inner membrane from the cytosol to the mitochondrial matrix for their oxidation by the mitochondrial fatty acid-oxidation pathway. This Dictyostelium discoideum (Social amoeba) protein is Mitochondrial substrate carrier family protein S (mcfS).